Here is a 279-residue protein sequence, read N- to C-terminus: Thymidylate synthase (279 aa).

Position 133 to 134 (133 to 134 (RR)) interacts with dUMP. Residue C154 is the Nucleophile of the active site. DUMP-binding positions include 178–181 (RSND), N189, and 219–221 (HIY). D181 lines the (6R)-5,10-methylene-5,6,7,8-tetrahydrofolate pocket. (6R)-5,10-methylene-5,6,7,8-tetrahydrofolate is bound at residue A278.

It belongs to the thymidylate synthase family. Bacterial-type ThyA subfamily. In terms of assembly, homodimer.

It is found in the cytoplasm. The catalysed reaction is dUMP + (6R)-5,10-methylene-5,6,7,8-tetrahydrofolate = 7,8-dihydrofolate + dTMP. Its pathway is pyrimidine metabolism; dTTP biosynthesis. Catalyzes the reductive methylation of 2'-deoxyuridine-5'-monophosphate (dUMP) to 2'-deoxythymidine-5'-monophosphate (dTMP) while utilizing 5,10-methylenetetrahydrofolate (mTHF) as the methyl donor and reductant in the reaction, yielding dihydrofolate (DHF) as a by-product. This enzymatic reaction provides an intracellular de novo source of dTMP, an essential precursor for DNA biosynthesis. The polypeptide is Thymidylate synthase (Streptococcus agalactiae serotype Ia (strain ATCC 27591 / A909 / CDC SS700)).